The primary structure comprises 630 residues: MDYSFDTTAEDPWVRISDCIKNLFSPIMSENPGHMPLQPNASLSEEDGTQGHPDGNPPKLDTANGTPKVYKSADRSTVKKGPPVAPKPAWFRQSLKGLRNRASDPRGLPDPALSTQPAPASREHLGPHIRASSSSSIKQRISSFETFGSSQLPDKGAQRLSLQPSSGEAAKPLGKHEGGRFSGLLGRGAAPTLVPQQPEQVLPSGSPAATEARDPGVSESPPPGLQPNQKTLPTGSDPLLRLLPTQTEKSQGPVLKMPSQRARSFPLTRSQSCETKLLDEKTSKLYSISSQVSSAVMKSLLCLPSSLSCAQTPCIPKEGASPTSSSNEDSAANGSAETSASDTGFSLNLSELREYTEGLTEAKEDDDGDHSSHQSGQSVISLLSSEELKQLIEEVKVLDEATLKQLDSIHVTILHKEEGAGLGFSLAGGADLENKVITVHKVFPNGLASQEGTIQKGNEVLSINGKSLKGTTHNDALAILRQAREPRQAVIVTRKLTAESMPDLNSTTDSAASASAASDVSVESSAEATVYTVTLEKMSAGLGFSLEGGKGSLHGDKPLTINRIFKGAASEQSETIQPGDEILQLAGTAMQGLTRFEAWNIIKALPDGPVTTVIRRKSLQPKETTAAADS.

Disordered regions lie at residues E30–T268 and P316–T343. Residues I129 to S143 show a composition bias toward low complexity. The residue at position 220 (S220) is a Phosphoserine. Residues S321–T343 are compositionally biased toward polar residues. The tract at residues K404–S500 is interaction with PPP1R12A, PPP1R12B and PPP1R12C. 2 PDZ domains span residues H410–K495 and T532–K617.

As to quaternary structure, homotetramer. Pro-interleukin-16 interacts (via PDZ 2 domain) with PPP1R12A, PPP1R12B and PPP1R12C. Pro-interleukin-16 interacts with GRIN2A. Pro-interleukin-16 interacts with GABPB1. Pro-interleukin-16 interacts (via PDZ 3 domain) with HDAC3.

Its subcellular location is the secreted. The protein localises to the cytoplasm. It is found in the nucleus. Functionally, interleukin-16 stimulates a migratory response in CD4+ lymphocytes, monocytes, and eosinophils. Primes CD4+ T-cells for IL-2 and IL-15 responsiveness. Also induces T-lymphocyte expression of interleukin 2 receptor. Ligand for CD4. Its function is as follows. Pro-interleukin-16 is involved in cell cycle progression in T-cells. Appears to be involved in transcriptional regulation of SKP2 and is probably part of a transcriptional repression complex on the core promoter of the SKP2 gene. May act as a scaffold for GABPB1 (the DNA-binding subunit the GABP transcription factor complex) and HDAC3 thus maintaining transcriptional repression and blocking cell cycle progression in resting T-cells. The sequence is that of Pro-interleukin-16 (IL16) from Macaca fascicularis (Crab-eating macaque).